Reading from the N-terminus, the 416-residue chain is Enterobactin exporter EntS (416 aa).

Over 1–21 the chain is Cytoplasmic; it reads MNKQSWLLNLSLLKTHPAFRA. Residues 22 to 42 traverse the membrane as a helical segment; the sequence is VFLARFISIVSLGLLGVAVPV. Residues 43 to 55 are Periplasmic-facing; it reads QIQMMTHSTWQVG. Residues 56 to 76 traverse the membrane as a helical segment; the sequence is LSVTLTGGAMFVGLMVGGVLA. Residues 77–83 lie on the Cytoplasmic side of the membrane; that stretch reads DRYERKK. A helical transmembrane segment spans residues 84–104; sequence VILLARGTCGIGFIGLCLNAL. The Periplasmic portion of the chain corresponds to 105–109; the sequence is LPEPS. The chain crosses the membrane as a helical span at residues 110–130; sequence LLAIYLLGLWDGFFASLGVTA. Topologically, residues 131–156 are cytoplasmic; the sequence is LLAATPALVGRENLMQAGAITMLTVR. Residues 157–177 traverse the membrane as a helical segment; it reads LGSVISPMIGGLLLATGGVAW. Asn-178 is a topological domain (periplasmic). A helical membrane pass occupies residues 179–199; it reads YGLAAAGTFITLLPLLSLPAL. The Cytoplasmic segment spans residues 200 to 218; it reads PPPPQPREHPLKSLLAGFR. Residues 219–239 form a helical membrane-spanning segment; it reads FLLASPLVGGIALLGGLLTMA. Residues 240–256 lie on the Periplasmic side of the membrane; it reads SAVRVLYPALADNWQMS. The helical transmembrane segment at 257 to 277 threads the bilayer; sequence AAQIGFLYAAIPLGAAIGALT. At 278 to 287 the chain is on the cytoplasmic side; it reads SGKLAHSARP. The helical transmembrane segment at 288–307 threads the bilayer; it reads GLLMLLSTLGSFLAIGLFGL. At 308-313 the chain is on the periplasmic side; that stretch reads MPMWIL. The helical transmembrane segment at 314–336 threads the bilayer; it reads GVVCLALFGWLSAVSSLLQYTML. At 337 to 356 the chain is on the cytoplasmic side; that stretch reads QTQTPEAMLGRINGLWTAQN. The helical transmembrane segment at 357 to 377 threads the bilayer; it reads VTGDAIGAALLGGLGAMMTPV. Position 378 (Ala-378) is a topological domain, periplasmic. A helical membrane pass occupies residues 379–399; sequence SASASGFGLLIIGVLLLLVLV. The Cytoplasmic portion of the chain corresponds to 400–416; the sequence is ELRRFRQTPPQVTASDG.

Belongs to the major facilitator superfamily. EntS (TC 2.A.1.38) family.

It localises to the cell inner membrane. Functionally, component of an export pathway for enterobactin. The polypeptide is Enterobactin exporter EntS (Escherichia coli O157:H7).